Reading from the N-terminus, the 120-residue chain is Seripauperin-13 (120 aa).

The first 25 residues, 1 to 25, serve as a signal peptide directing secretion; it reads MVKLTSIAAGVAAIAATASATTTLA.

It belongs to the SRP1/TIP1 family. Seripauperin subfamily.

The sequence is that of Seripauperin-13 (PAU13) from Saccharomyces cerevisiae (strain ATCC 204508 / S288c) (Baker's yeast).